We begin with the raw amino-acid sequence, 239 residues long: tRNA1(Val) (adenine(37)-N6)-methyltransferase (239 aa).

The protein belongs to the methyltransferase superfamily. tRNA (adenine-N(6)-)-methyltransferase family.

It is found in the cytoplasm. It carries out the reaction adenosine(37) in tRNA1(Val) + S-adenosyl-L-methionine = N(6)-methyladenosine(37) in tRNA1(Val) + S-adenosyl-L-homocysteine + H(+). Functionally, specifically methylates the adenine in position 37 of tRNA(1)(Val) (anticodon cmo5UAC). In Vibrio campbellii (strain ATCC BAA-1116), this protein is tRNA1(Val) (adenine(37)-N6)-methyltransferase.